Consider the following 124-residue polypeptide: Large ribosomal subunit protein bL19 (124 aa).

The protein belongs to the bacterial ribosomal protein bL19 family.

In terms of biological role, this protein is located at the 30S-50S ribosomal subunit interface and may play a role in the structure and function of the aminoacyl-tRNA binding site. This is Large ribosomal subunit protein bL19 from Orientia tsutsugamushi (strain Boryong) (Rickettsia tsutsugamushi).